The chain runs to 162 residues: Caveolin-2 (162 aa).

The Cytoplasmic portion of the chain corresponds to 1–86; sequence MGLETEKADA…FEVSKYLIYK (86 aa). Tyr19 carries the post-translational modification Phosphotyrosine; by SRC. The tract at residues 19 to 40 is disordered; it reads YSRHSGLGYPEPEKCAKSTQDR. Residues Ser20 and Ser23 each carry the phosphoserine modification. Tyr27 carries the post-translational modification Phosphotyrosine; by SRC. The segment covering 29-40 has biased composition (basic and acidic residues); it reads EPEKCAKSTQDR. A Phosphoserine modification is found at Ser36. Positions 87-107 form an intramembrane region, helical; the sequence is VLTVLLAIPLAFVAGILFATL. The Cytoplasmic portion of the chain corresponds to 108-162; the sequence is SCLHIWIVVPFVKTCLMVLPSVQTVWHSITDGFIAPLYKSMGLIFSSISLRLSPE.

Belongs to the caveolin family. Monomer or homodimer. Interacts with CAV1; the interaction forms a stable heterooligomeric complex that is required for targeting to lipid rafts and for caveolae formation. Tyrosine phosphorylated forms do not form heterooligomers with the Tyr-19-phosphorylated form existing as a monomer or dimer, and the Tyr-27-form as a monomer only. Interacts (tyrosine phosphorylated form) with the SH2 domain-containing proteins, RASA1, NCK1 and SRC. Interacts (tyrosine phosphorylated form) with INSR, the interaction (Tyr-27-phosphorylated form) is increased on insulin stimulation. Interacts (Tyr-19 phosphorylated form) with MAPK1 (phosphorylated form); the interaction, promoted by insulin, leads to nuclear location and MAPK1 activation. Interacts with STAT3; the interaction is increased on insulin-induced tyrosine phosphorylation leading to STAT activation. Post-translationally, phosphorylated on serine and tyrosine residues. CAV1 promotes phosphorylation on Ser-23 which then targets the complex to the plasma membrane, lipid rafts and caveolae. Phosphorylation on Ser-36 appears to modulate mitosis in endothelial cells. Phosphorylation on both Tyr-19 and Tyr-27 is required for insulin-induced 'Ser-727' phosphorylation of STAT3 and its activation. Phosphorylation on Tyr-19 is required for insulin-induced phosphorylation of MAPK1 and DNA binding of STAT3. Tyrosine phosphorylation is induced by both EGF and insulin (By. similarity).

It localises to the nucleus. It is found in the cytoplasm. The protein localises to the golgi apparatus membrane. Its subcellular location is the cell membrane. The protein resides in the membrane. It localises to the caveola. Functionally, may act as a scaffolding protein within caveolar membranes. Interacts directly with G-protein alpha subunits and can functionally regulate their activity. Acts as an accessory protein in conjunction with CAV1 in targeting to lipid rafts and driving caveolae formation. The Ser-36 phosphorylated form has a role in modulating mitosis in endothelial cells. Positive regulator of cellular mitogenesis of the MAPK signaling pathway. Required for the insulin-stimulated nuclear translocation and activation of MAPK1 and STAT3, and the subsequent regulation of cell cycle progression. This is Caveolin-2 (CAV2) from Didelphis virginiana (North American opossum).